The primary structure comprises 120 residues: Large ribosomal subunit protein uL22 (120 aa).

The protein belongs to the universal ribosomal protein uL22 family. Part of the 50S ribosomal subunit.

Its function is as follows. This protein binds specifically to 23S rRNA; its binding is stimulated by other ribosomal proteins, e.g. L4, L17, and L20. It is important during the early stages of 50S assembly. It makes multiple contacts with different domains of the 23S rRNA in the assembled 50S subunit and ribosome. The globular domain of the protein is located near the polypeptide exit tunnel on the outside of the subunit, while an extended beta-hairpin is found that lines the wall of the exit tunnel in the center of the 70S ribosome. The protein is Large ribosomal subunit protein uL22 of Corynebacterium diphtheriae (strain ATCC 700971 / NCTC 13129 / Biotype gravis).